The sequence spans 84 residues: UPF0298 protein NWMN_0985 (84 aa).

It belongs to the UPF0298 family.

Its subcellular location is the cytoplasm. This is UPF0298 protein NWMN_0985 from Staphylococcus aureus (strain Newman).